Consider the following 466-residue polypeptide: MALNPDRLFSAEPGTREIARRLFASVEKLPIISPHGHTEPIWYARNEAFPDPASLFVKPDHYITRMLYSQGHSLESLGIASRDGRPSETDARKIWRLFATNWYLFRATPSRLWFEHAMETVFGITERLSQENADRIFDAIADQLTQPHMRPRALYDRFNIEAISTTDAATDPLIYHDEVIASGWHGRIIPAYRPDAAVDAGRPDFASEVEKLVGVAGTPLTWQGYLDAHRNRREYFKRRGATSSDHGHPTAQTADLSAGDASRLFDRVIKGNASTSDAEMFRAQMLTEMARMSIDDGLVMQIHPGSFRNHNPTVFERFGLDKGADIPRQTGFVDQLKPLLDGFGNDPRLTVILFTLDETAYSRELAPLAGDYPALKLGPAWWFFDSPEGILRYRKLTTETAGFYNTVGFNDDTRAYLSIPARHDMARRVDCAYLAGLVADHRLEEDEAYEVAHDLAYRLAKQTYKL.

This sequence belongs to the metallo-dependent hydrolases superfamily. Uronate isomerase family.

The catalysed reaction is D-glucuronate = D-fructuronate. It catalyses the reaction aldehydo-D-galacturonate = keto-D-tagaturonate. It participates in carbohydrate metabolism; pentose and glucuronate interconversion. The chain is Uronate isomerase from Brucella suis (strain ATCC 23445 / NCTC 10510).